The following is a 129-amino-acid chain: Copper chaperone GriE (129 aa).

Residues 1 to 37 constitute a signal peptide (tat-type signal); that stretch reads MPMNRREMVMATTGAALAAAAAVPLLSGGEGEGAAEA. Residues 32–51 form a disordered region; it reads EGAAEAAAAPAKATGRGREH. Positions 34–45 are enriched in low complexity; sequence AAEAAAAPAKAT.

The protein belongs to the melC1 family. Post-translationally, predicted to be exported by the Tat system. The position of the signal peptide cleavage has not been experimentally proven.

Its function is as follows. Involved in the transfer of Cu(2+) ions to the apo form of o-aminophenol oxidase GriF in the grixazone biosynthetic pathway. This is Copper chaperone GriE (griE) from Streptomyces griseus subsp. griseus (strain JCM 4626 / CBS 651.72 / NBRC 13350 / KCC S-0626 / ISP 5235).